A 1491-amino-acid chain; its full sequence is Chromosome partition protein MukB (1491 aa).

ATP is bound at residue 34 to 41 (GGNGAGKS). Coiled coils occupy residues 302–450 (LIEQ…LKAE), 490–600 (ARSE…RFES), 781–806 (RAAR…AKAS), 836–1109 (EQAL…DLRT), and 1210–1239 (VEAI…ISSD). A flexible hinge region spans residues 667–784 (PGGSNDPRLK…AIPLFGRAAR (118 aa)). The tract at residues 1059–1080 (QRRRDELQERLHTSRSRKSEYE) is disordered.

This sequence belongs to the SMC family. MukB subfamily. In terms of assembly, homodimerization via its hinge domain. Binds to DNA via its C-terminal region. Interacts, and probably forms a ternary complex, with MukE and MukF via its C-terminal region. The complex formation is stimulated by calcium or magnesium. Interacts with tubulin-related protein FtsZ.

Its subcellular location is the cytoplasm. It is found in the nucleoid. Its function is as follows. Plays a central role in chromosome condensation, segregation and cell cycle progression. Functions as a homodimer, which is essential for chromosome partition. Involved in negative DNA supercoiling in vivo, and by this means organize and compact chromosomes. May achieve or facilitate chromosome segregation by condensation DNA from both sides of a centrally located replisome during cell division. The protein is Chromosome partition protein MukB of Vibrio cholerae serotype O1 (strain ATCC 39315 / El Tor Inaba N16961).